A 601-amino-acid chain; its full sequence is MTASAQKNIRNFSIVAHIDHGKSTLADRLIQITGGLTEREMTDQVLDSMDIERERGITIKAQTVRLSYKAKDGETYILNLIDTPGHVDFAYEVNRSLAAVEGSLLVVDASQGVEAQTLANVYQAIDNNHDIVPVLNKVDLPAAEPEKVKAQIEDVIGLDASDAIGISAKTGLNVDQVLEAIVTRLPPPMGDRAAPLKALLVDSWYDTYLGVVVLVRIIDGVLKKGQRIKMMGSGAVNDVDRVGVFTPKMVAMAELGPGEIGFLTGSIKEVADTRVGDTITEDKRPCADMLPGFKPAQPVVFCGLFPVDAAQFEDLRAAMGKLRLNDASFSYEMETSAALGFGFRCGFLGLLHLEIIQERLEREFNLDLIATAPSVIYEIQMTDGSVIDLHNPADMPDVVKIEEIREPWIRATILTPDEYLGSVLKLCQDRRGTQIELTYVGARAMVTYDLPLNEVVFDFYDRLKSISKGYASFDYQITEYRAGDLVKMSILVNSEPVDALSMLVHRARADARGRVMCEKLKDLIPQHLFNIPIQAAIGAKIIARETIKALRKDVTAKCYGGDISRKRKLLDKQKEGKKKMRQFGKVEIPQEAFIAALKMDE.

A tr-type G domain is found at 7 to 189; that stretch reads KNIRNFSIVA…AIVTRLPPPM (183 aa). GTP-binding positions include 19-24 and 136-139; these read DHGKST and NKVD.

It belongs to the TRAFAC class translation factor GTPase superfamily. Classic translation factor GTPase family. LepA subfamily.

It localises to the cell inner membrane. It carries out the reaction GTP + H2O = GDP + phosphate + H(+). Its function is as follows. Required for accurate and efficient protein synthesis under certain stress conditions. May act as a fidelity factor of the translation reaction, by catalyzing a one-codon backward translocation of tRNAs on improperly translocated ribosomes. Back-translocation proceeds from a post-translocation (POST) complex to a pre-translocation (PRE) complex, thus giving elongation factor G a second chance to translocate the tRNAs correctly. Binds to ribosomes in a GTP-dependent manner. The sequence is that of Elongation factor 4 from Xanthobacter autotrophicus (strain ATCC BAA-1158 / Py2).